Here is a 62-residue protein sequence, read N- to C-terminus: Sperm protamine P1 (62 aa).

Positions 1 to 62 (MARYRHSRSR…RYSRRRRRRY (62 aa)) are disordered.

It belongs to the protamine P1 family. As to expression, testis.

It is found in the nucleus. The protein resides in the chromosome. Protamines substitute for histones in the chromatin of sperm during the haploid phase of spermatogenesis. They compact sperm DNA into a highly condensed, stable and inactive complex. The protein is Sperm protamine P1 (PRM1) of Dorcopsulus vanheurni (Lesser forest wallaby).